The following is a 681-amino-acid chain: Peroxisomal acyl-coenzyme A oxidase 2 (681 aa).

2 positions are modified to phosphoserine: Ser3 and Ser9. 6 positions are modified to N6-succinyllysine: Lys66, Lys137, Lys303, Lys453, Lys561, and Lys667. The short motif at 679-681 (HKM) is the Microbody targeting signal element.

The protein belongs to the acyl-CoA oxidase family. As to quaternary structure, homodimer. Requires FAD as cofactor. As to expression, most abundant in liver. Also expressed in kidney. Not present in any other tissues tested.

The protein localises to the peroxisome. The catalysed reaction is (25R)-3alpha,7alpha,12alpha-trihydroxy-5beta-cholestan-26-oyl-CoA + A + H2O = (24R,25R)-3alpha,7alpha,12alpha,24-tetrahydroxy-5beta-cholestan-26-oyl-CoA + AH2. It carries out the reaction (25S)-3alpha,7alpha,12alpha-trihydroxy-5beta-cholestan-26-oyl-CoA + O2 = (24E)-3alpha,7alpha,12alpha-trihydroxy-5beta-cholest-24-en-26-oyl-CoA + H2O2. Its function is as follows. Oxidizes the CoA esters of the bile acid intermediates di- and tri-hydroxycoprostanic acids. Capable of oxidizing short as well as long chain 2-methyl branched fatty acids. The polypeptide is Peroxisomal acyl-coenzyme A oxidase 2 (Rattus norvegicus (Rat)).